A 251-amino-acid chain; its full sequence is MNLNSIPAFQDNYIWVLTNDEGRCVIVDPGEAAPVLKAIAEHKWMPEAIFLTHHHHDHVGGVKELLQHFPQMTVYGPAETKDKGATHLVGDGDTIRVLGEKFTLFATPGHTLGHVCYFSHPYLFCGDTLFSGGCGRLFEGTPSQMYQSLMKINSLPDDTLICCAHEYTLANIKFALSILPHDSFINEYYRKVKELRVKKQMTLPVILKNERKINLFLRTEDIDLINEINKETILQQPEARFAWLRSKKDTF.

Residues His53, His55, Asp57, His58, His110, Asp127, and His165 each contribute to the Zn(2+) site.

This sequence belongs to the metallo-beta-lactamase superfamily. Glyoxalase II family. In terms of assembly, monomer. Requires Zn(2+) as cofactor.

The catalysed reaction is an S-(2-hydroxyacyl)glutathione + H2O = a 2-hydroxy carboxylate + glutathione + H(+). It functions in the pathway secondary metabolite metabolism; methylglyoxal degradation; (R)-lactate from methylglyoxal: step 2/2. Thiolesterase that catalyzes the hydrolysis of S-D-lactoyl-glutathione to form glutathione and D-lactic acid. The sequence is that of Hydroxyacylglutathione hydrolase from Salmonella gallinarum (strain 287/91 / NCTC 13346).